We begin with the raw amino-acid sequence, 343 residues long: MKALVKSRRAEGIWMVHDAPVPEVGVHDVRIRVRKSAICGTDVHIYNWDEWSQRTIPVPMIVGHEYVGVVDAVGGEVEAFHPGDRVSGEGHVTCGFCRNCRAGRRHLCRHTIGVGVNRPGSFAEYVVIPADNVYRIPDDIPDEVAAIFDPYGNATHTALSFELVGEDVLVTGAGPIGVMAVSIARHVGARHVVVTDVNDYRLGLARRMGATRAVNVAREDLRAVMKDLGMKEGFDVGLEMSGNGRAFRQMLEAMNHGAKVALLGIMPGEEAIDWSQVVFKGLVLKGIYGREMYETWYKMVAMLQSGLDISPVITHRFPIDEFQQGFDVMRSGQSGKVVLDWGT.

Residue C39 participates in Zn(2+) binding. Catalysis depends on charge relay system residues T41 and H44. Positions 64, 65, 94, 97, 100, and 108 each coordinate Zn(2+). Residues I176, D196, R201, 263-265 (LGI), and 287-288 (IY) each bind NAD(+).

The protein belongs to the zinc-containing alcohol dehydrogenase family. As to quaternary structure, homotetramer. Zn(2+) is required as a cofactor.

It is found in the cytoplasm. It carries out the reaction L-threonine + NAD(+) = (2S)-2-amino-3-oxobutanoate + NADH + H(+). The protein operates within amino-acid degradation; L-threonine degradation via oxydo-reductase pathway; glycine from L-threonine: step 1/2. Its function is as follows. Catalyzes the NAD(+)-dependent oxidation of L-threonine to 2-amino-3-ketobutyrate. The chain is L-threonine 3-dehydrogenase from Anaeromyxobacter sp. (strain Fw109-5).